We begin with the raw amino-acid sequence, 143 residues long: Phospholipase A2 isozymes PA3A/PA3B/PA5 (143 aa).

Ca(2+) is bound by residues Trp10, Gly12, and Gly14. Intrachain disulfides connect Cys11-Cys33, Cys32-Cys72, and Cys39-Cys65. Residue His36 is part of the active site. Residue Asp37 participates in Ca(2+) binding.

The protein belongs to the phospholipase A2 family. Group III subfamily. Ca(2+) serves as cofactor. Expressed by the venom gland.

The protein localises to the secreted. It carries out the reaction a 1,2-diacyl-sn-glycero-3-phosphocholine + H2O = a 1-acyl-sn-glycero-3-phosphocholine + a fatty acid + H(+). Functionally, PLA2 catalyzes the calcium-dependent hydrolysis of the 2-acyl groups in 3-sn-phosphoglycerides. The sequence is that of Phospholipase A2 isozymes PA3A/PA3B/PA5 from Heloderma suspectum (Gila monster).